A 95-amino-acid polypeptide reads, in one-letter code: Co-chaperonin GroES (95 aa).

It belongs to the GroES chaperonin family. In terms of assembly, heptamer of 7 subunits arranged in a ring. Interacts with the chaperonin GroEL.

The protein resides in the cytoplasm. Its function is as follows. Together with the chaperonin GroEL, plays an essential role in assisting protein folding. The GroEL-GroES system forms a nano-cage that allows encapsulation of the non-native substrate proteins and provides a physical environment optimized to promote and accelerate protein folding. GroES binds to the apical surface of the GroEL ring, thereby capping the opening of the GroEL channel. This chain is Co-chaperonin GroES, found in Rickettsia akari (strain Hartford).